We begin with the raw amino-acid sequence, 367 residues long: Popeye domain-containing protein 2 (367 aa).

A glycan (N-linked (GlcNAc...) asparagine) is linked at asparagine 4. 2 consecutive transmembrane segments (helical) span residues 36 to 56 (FLLM…LFGI) and 77 to 97 (IVLW…QLVY). 2 disordered regions span residues 273 to 292 (PSAS…ALEA) and 312 to 367 (APPA…TPEL). The segment covering 278–290 (GEPESEKDDEEAL) has biased composition (acidic residues). The span at 344–356 (PLQNSSQVMSRSQ) shows a compositional bias: polar residues. Asparagine 347 is a glycosylation site (N-linked (GlcNAc...) asparagine). Residue threonine 364 is modified to Phosphothreonine.

The protein belongs to the popeye family. In terms of tissue distribution, expressed in the developing and adult heart, with high expression levels in the sinus and atrioventricular nodes. Also expressed in the bladder and skeletal muscle.

The protein localises to the membrane. It is found in the cell membrane. It localises to the sarcolemma. Important for the maintenance of cardiac function. Plays a regulatory function in heart rate dynamics mediated, at least in part, through cAMP-binding and, probably, by increasing cell surface expression of the potassium channel KCNK2 and enhancing current density. This chain is Popeye domain-containing protein 2 (Popdc2), found in Mus musculus (Mouse).